The following is an 85-amino-acid chain: Putative septation protein SpoVG (85 aa).

Belongs to the SpoVG family.

Its function is as follows. Could be involved in septation. This is Putative septation protein SpoVG from Archaeoglobus fulgidus (strain ATCC 49558 / DSM 4304 / JCM 9628 / NBRC 100126 / VC-16).